We begin with the raw amino-acid sequence, 284 residues long: Flavin-dependent thymidylate synthase (284 aa).

Residues 27–237 form the ThyX domain; that stretch reads GFIRVVDYMG…PLAYNAFVEY (211 aa). FAD contacts are provided by residues Thr73, 96 to 98, and Glu104; that span reads RHR. Residues 93 to 96 and 104 to 108 each bind dUMP; these read QWIR and EYSAR. The ThyX motif signature appears at 96-106; it reads RHRTANVNEYS. Positions 122 to 142 are disordered; that stretch reads EQVAKQSDNNKQGSGEAFDPD. The segment covering 125 to 134 has biased composition (polar residues); sequence AKQSDNNKQG. Arg176 is a binding site for dUMP. FAD-binding positions include 192 to 194 and His198; that span reads DLH. Arg203 is a binding site for dUMP. Arg203 (involved in ionization of N3 of dUMP, leading to its activation) is an active-site residue.

Belongs to the thymidylate synthase ThyX family. As to quaternary structure, homotetramer. The cofactor is FAD.

The catalysed reaction is dUMP + (6R)-5,10-methylene-5,6,7,8-tetrahydrofolate + NADPH + H(+) = dTMP + (6S)-5,6,7,8-tetrahydrofolate + NADP(+). The protein operates within pyrimidine metabolism; dTTP biosynthesis. Functionally, catalyzes the reductive methylation of 2'-deoxyuridine-5'-monophosphate (dUMP) to 2'-deoxythymidine-5'-monophosphate (dTMP) while utilizing 5,10-methylenetetrahydrofolate (mTHF) as the methyl donor, and NADPH and FADH(2) as the reductant. The chain is Flavin-dependent thymidylate synthase from Wolbachia pipientis wMel.